Reading from the N-terminus, the 183-residue chain is uncharacterized protein (183 aa).

This is an uncharacterized protein from Saccharomyces cerevisiae (strain ATCC 204508 / S288c) (Baker's yeast).